The chain runs to 455 residues: tRNA modification GTPase MnmE (455 aa).

(6S)-5-formyl-5,6,7,8-tetrahydrofolate is bound by residues Arg-22, Glu-85, and Arg-124. Residues 220–377 enclose the TrmE-type G domain; it reads GIYTVIVGRP…VEKAIKEAIL (158 aa). Asn-230 provides a ligand contact to K(+). GTP contacts are provided by residues 230-235, 249-255, and 274-277; these read NVGKSS, TDIPGTT, and DTAG. Residue Ser-234 coordinates Mg(2+). K(+) contacts are provided by Thr-249, Ile-251, and Thr-254. Residue Thr-255 coordinates Mg(2+). Residue Lys-455 participates in (6S)-5-formyl-5,6,7,8-tetrahydrofolate binding.

Belongs to the TRAFAC class TrmE-Era-EngA-EngB-Septin-like GTPase superfamily. TrmE GTPase family. Homodimer. Heterotetramer of two MnmE and two MnmG subunits. It depends on K(+) as a cofactor.

The protein localises to the cytoplasm. Its function is as follows. Exhibits a very high intrinsic GTPase hydrolysis rate. Involved in the addition of a carboxymethylaminomethyl (cmnm) group at the wobble position (U34) of certain tRNAs, forming tRNA-cmnm(5)s(2)U34. This chain is tRNA modification GTPase MnmE, found in Caldicellulosiruptor saccharolyticus (strain ATCC 43494 / DSM 8903 / Tp8T 6331).